Reading from the N-terminus, the 119-residue chain is UPF0102 protein CGSHiGG_01960 (119 aa).

It belongs to the UPF0102 family.

This Haemophilus influenzae (strain PittGG) protein is UPF0102 protein CGSHiGG_01960.